The following is a 102-amino-acid chain: NADH-quinone oxidoreductase subunit K (102 aa).

Transmembrane regions (helical) follow at residues 6-26, 30-50, and 63-83; these read LIGM…GVLA, ILFQ…AFVA, and MLIL…ALLL.

The protein belongs to the complex I subunit 4L family. In terms of assembly, NDH-1 is composed of 14 different subunits. Subunits NuoA, H, J, K, L, M, N constitute the membrane sector of the complex.

The protein resides in the cell inner membrane. It carries out the reaction a quinone + NADH + 5 H(+)(in) = a quinol + NAD(+) + 4 H(+)(out). Its function is as follows. NDH-1 shuttles electrons from NADH, via FMN and iron-sulfur (Fe-S) centers, to quinones in the respiratory chain. The immediate electron acceptor for the enzyme in this species is believed to be ubiquinone. Couples the redox reaction to proton translocation (for every two electrons transferred, four hydrogen ions are translocated across the cytoplasmic membrane), and thus conserves the redox energy in a proton gradient. This is NADH-quinone oxidoreductase subunit K from Rhodopseudomonas palustris (strain HaA2).